Here is a 223-residue protein sequence, read N- to C-terminus: MQILKNDWHELLKDEFEQEYYQQLRKHLIQEYRTRTIYPDMYDIFNALHFTSYQDVKVVILGQDPYHGPNQAHGLSFSVKPGVPAPPSLQNIFKELQSDLGCRIPNHGYLKKWAEQGVLLLNTSLTVRAGQANSHAQIGWHQFTDKVIAALSQRQDPVVFILWGKNAQAKQSIIGSQHFIIKSVHPSPLSAHAGFFGSKPFSKANNFLVSQGKEPIDWQIEDI.

The Proton acceptor role is filled by Asp-64.

It belongs to the uracil-DNA glycosylase (UDG) superfamily. UNG family.

It localises to the cytoplasm. It catalyses the reaction Hydrolyzes single-stranded DNA or mismatched double-stranded DNA and polynucleotides, releasing free uracil.. Excises uracil residues from the DNA which can arise as a result of misincorporation of dUMP residues by DNA polymerase or due to deamination of cytosine. This is Uracil-DNA glycosylase from Desulfitobacterium hafniense (strain DSM 10664 / DCB-2).